The primary structure comprises 312 residues: Bifunctional pinoresinol-lariciresinol reductase (312 aa).

Residues 11-17 (GGTGYIG), arginine 36, and lysine 45 contribute to the NADP(+) site. The Proton acceptor role is filled by lysine 138. Arginine 142 serves as a coordination point for NADP(+). Histidine 270 contributes to the substrate binding site.

The protein belongs to the NmrA-type oxidoreductase family. Isoflavone reductase subfamily. As to quaternary structure, dimer.

It carries out the reaction (+)-lariciresinol + NADP(+) = (+)-pinoresinol + NADPH + H(+). The enzyme catalyses (-)-secoisolariciresinol + NADP(+) = (+)-lariciresinol + NADPH + H(+). Its function is as follows. Reductase involved in lignan biosynthesis. Catalyzes the enantioselective sequential conversion of (+)-pinoresinol into (+)-lariciresinol and of (+)-lariciresinol into (-)-secoisolariciresinol. Abstracts the 4R-hydride from the NADPH cofactor during catalysis. The polypeptide is Bifunctional pinoresinol-lariciresinol reductase (Thuja plicata (Western red-cedar)).